A 474-amino-acid polypeptide reads, in one-letter code: tRNA-2-methylthio-N(6)-dimethylallyladenosine synthase (474 aa).

The 118-residue stretch at 3–120 (KKLHIKTWGC…LPEMINSVRG (118 aa)) folds into the MTTase N-terminal domain. Residues C12, C49, C83, C157, C161, and C164 each contribute to the [4Fe-4S] cluster site. The Radical SAM core domain maps to 143 to 378 (RADGPSAFVS…INQQVTAWSR (236 aa)). In terms of domain architecture, TRAM spans 378–441 (RRMLGTTQRI…TNSMRGKVVR (64 aa)).

This sequence belongs to the methylthiotransferase family. MiaB subfamily. Monomer. [4Fe-4S] cluster is required as a cofactor.

It localises to the cytoplasm. The enzyme catalyses N(6)-dimethylallyladenosine(37) in tRNA + (sulfur carrier)-SH + AH2 + 2 S-adenosyl-L-methionine = 2-methylsulfanyl-N(6)-dimethylallyladenosine(37) in tRNA + (sulfur carrier)-H + 5'-deoxyadenosine + L-methionine + A + S-adenosyl-L-homocysteine + 2 H(+). Its function is as follows. Catalyzes the methylthiolation of N6-(dimethylallyl)adenosine (i(6)A), leading to the formation of 2-methylthio-N6-(dimethylallyl)adenosine (ms(2)i(6)A) at position 37 in tRNAs that read codons beginning with uridine. The sequence is that of tRNA-2-methylthio-N(6)-dimethylallyladenosine synthase from Enterobacter sp. (strain 638).